The chain runs to 463 residues: Retinoic acid receptor RXR-gamma (463 aa).

Positions 1–138 (MYGNYSHFMK…TSPGSLVKHI (138 aa)) are modulating. A disordered region spans residues 17-53 (GSPGHSGSTSMSPSAALSTGKPMDSHPSYTDTPVSAP). Residues 21-33 (HSGSTSMSPSAAL) are compositionally biased toward polar residues. NR C4-type zinc fingers lie at residues 139 to 159 (CAIC…CEGC) and 175 to 199 (CRDN…YQKC). A DNA-binding region (nuclear receptor) is located at residues 139–204 (CAICGDRSSG…RYQKCLVMGM (66 aa)). Residues 205-230 (KREAVQEERQRSRERAESEAECASSG) form a hinge region. The span at 211–222 (EERQRSRERAES) shows a compositional bias: basic and acidic residues. A disordered region spans residues 211-232 (EERQRSRERAESEAECASSGHE). The 229-residue stretch at 231 to 459 (HEDMPVERIL…TFLMEMLETP (229 aa)) folds into the NR LBD domain.

It belongs to the nuclear hormone receptor family. NR2 subfamily. In terms of assembly, homodimer. Heterodimer with a RAR molecule. Binds DNA preferentially as a RAR/RXR heterodimer. Interacts with RARA. Acetylated by EP300.

It is found in the nucleus. It localises to the cytoplasm. Receptor for retinoic acid. Retinoic acid receptors bind as heterodimers to their target response elements in response to their ligands, all-trans or 9-cis retinoic acid, and regulate gene expression in various biological processes. The RAR/RXR heterodimers bind to the retinoic acid response elements (RARE) composed of tandem 5'-AGGTCA-3' sites known as DR1-DR5. The high affinity ligand for RXRs is 9-cis retinoic acid. The polypeptide is Retinoic acid receptor RXR-gamma (RXRG) (Sus scrofa (Pig)).